Reading from the N-terminus, the 156-residue chain is Eosinophil cationic protein 2 (156 aa).

Residues 1–25 (MGPKLLESRLCLLLLLGLVLMLASC) form the signal peptide. His-38 functions as the Proton acceptor in the catalytic mechanism. Disulfide bonds link Cys-47-Cys-106, Cys-61-Cys-119, Cys-79-Cys-134, and Cys-86-Cys-94. 62–66 (KGLNT) provides a ligand contact to substrate. N-linked (GlcNAc...) asparagine glycosylation is found at Asn-89, Asn-96, and Asn-107. His-151 serves as the catalytic Proton donor.

The protein belongs to the pancreatic ribonuclease family.

Its subcellular location is the cytoplasmic granule. In terms of biological role, cytotoxin and helminthotoxin with ribonuclease activity. Selectively chemotactic for dendritic cells. Possesses a wide variety of biological activities. The chain is Eosinophil cationic protein 2 (Ear2) from Mus musculus (Mouse).